Reading from the N-terminus, the 361-residue chain is Zygote arrest protein 1 (361 aa).

2 disordered regions span residues 68–129 and 142–252; these read GPRP…PRSW and GLSS…EQDK. The span at 116 to 128 shows a compositional bias: low complexity; it reads PRSPARAGRPPRS. A Phosphothreonine modification is found at Thr-155. Residues 238–252 show a composition bias toward basic and acidic residues; it reads ASRDRASPQSTEQDK. The 3CxxC-type zinc-finger motif lies at 263-346; the sequence is KYGYYHCKDC…RQDLCGRCKD (84 aa).

This sequence belongs to the ZAR1 family. Interacts with YBX2. In terms of processing, phosphorylation by CDK1 does not regulate formation of MARDO (mitochondria-associated ribonucleoprotein domain) membraneless compartment. Post-translationally, ubiquitinated and degradaded by the proteasome during oocyte meiotic maturation, leading to MARDO (mitochondria-associated ribonucleoprotein domain) membraneless compartment dissolution.

Its subcellular location is the cytoplasm. It is found in the cytoplasmic ribonucleoprotein granule. In terms of biological role, mRNA-binding protein that mediates formation of MARDO (mitochondria-associated ribonucleoprotein domain), a membraneless compartment that stores maternal mRNAs in oocytes. MARDO assembly around mitochondria is directed by an increase in mitochondrial membrane potential during oocyte growth. Promotes formation of MARDO phase-separated membraneless compartment by undergoing liquid-liquid phase separation upon binding to maternal mRNAs. Binds to the 3'-UTR of maternal mRNAs. Maternal mRNAs stored in the MARDO are translationally repressed. Essential for female fertility and oocyte-to-embryo transition by coordinating maternal mRNA storage, translation and degradation. This is Zygote arrest protein 1 from Rattus norvegicus (Rat).